The following is a 241-amino-acid chain: Probable histone-lysine N-methyltransferase set-23 (241 aa).

Residues 25-85 (QGCDCETQCS…SCRNKVVQNG (61 aa)) enclose the Pre-SET domain. Residues Cys27, Cys29, Cys33, Cys39, Cys41, Cys64, Cys68, Cys70, and Cys77 each coordinate Zn(2+). An SET domain is found at 88 to 210 (KKLKIFSTSE…VGEELSYDYG (123 aa)). Residues 98–100 (KGD), Asp138, Tyr140, Arg167, and 170–171 (NH) each bind S-adenosyl-L-methionine. The Zn(2+) site is built by Cys173, Cys222, Cys224, and Cys229. The region spanning 218–234 (NRKLCLCRSENCRKYLP) is the Post-SET domain.

Belongs to the class V-like SAM-binding methyltransferase superfamily. Histone-lysine methyltransferase family. Suvar3-9 subfamily.

Its subcellular location is the nucleus. It is found in the chromosome. It carries out the reaction L-lysyl-[histone] + S-adenosyl-L-methionine = N(6)-methyl-L-lysyl-[histone] + S-adenosyl-L-homocysteine + H(+). Its function is as follows. Probable histone methyltransferase required for embryonic development. In Caenorhabditis briggsae, this protein is Probable histone-lysine N-methyltransferase set-23.